The following is a 326-amino-acid chain: Ras association domain-containing protein 2 (326 aa).

Residues Glu111 to Leu133 form a disordered region. The Ras-associating domain occupies Tyr176–Gln264. The SARAH domain occupies Val272–Ile319.

As to quaternary structure, interacts directly with activated KRAS in a GTP-dependent manner. Interacts (via SARAH domain) with STK3/MST2 and STK4/MST1. Phosphorylated by STK3/MST2 and STK4/MST1. Widely expressed with highest levels in brain, placenta, peripheral blood and lung. Frequently down-regulated in lung tumor cell lines.

It localises to the nucleus. The protein localises to the cytoplasm. It is found in the chromosome. The protein resides in the centromere. Its subcellular location is the kinetochore. Functionally, potential tumor suppressor. Acts as a KRAS-specific effector protein. May promote apoptosis and cell cycle arrest. Stabilizes STK3/MST2 by protecting it from proteasomal degradation. The chain is Ras association domain-containing protein 2 (RASSF2) from Homo sapiens (Human).